The following is a 142-amino-acid chain: Fluoride-specific ion channel FluC 1 (142 aa).

4 consecutive transmembrane segments (helical) span residues 23–43, 54–74, 79–99, and 116–136; these read VNIA…YLID, LPLG…GLIG, GWLL…FSTF, and LGNV…AVSL. 2 residues coordinate Na(+): glycine 91 and threonine 94.

This sequence belongs to the fluoride channel Fluc/FEX (TC 1.A.43) family.

It is found in the cell membrane. The catalysed reaction is fluoride(in) = fluoride(out). With respect to regulation, na(+) is not transported, but it plays an essential structural role and its presence is essential for fluoride channel function. In terms of biological role, fluoride-specific ion channel. Important for reducing fluoride concentration in the cell, thus reducing its toxicity. This chain is Fluoride-specific ion channel FluC 1, found in Nocardia farcinica (strain IFM 10152).